We begin with the raw amino-acid sequence, 101 residues long: Small ribosomal subunit protein uS14 (101 aa).

It belongs to the universal ribosomal protein uS14 family. As to quaternary structure, part of the 30S ribosomal subunit. Contacts proteins S3 and S10.

Its function is as follows. Binds 16S rRNA, required for the assembly of 30S particles and may also be responsible for determining the conformation of the 16S rRNA at the A site. In Wigglesworthia glossinidia brevipalpis, this protein is Small ribosomal subunit protein uS14.